The following is a 261-amino-acid chain: Imidazole glycerol phosphate synthase subunit HisF (261 aa).

Residues D16 and D135 contribute to the active site.

The protein belongs to the HisA/HisF family. Heterodimer of HisH and HisF.

The protein localises to the cytoplasm. It carries out the reaction 5-[(5-phospho-1-deoxy-D-ribulos-1-ylimino)methylamino]-1-(5-phospho-beta-D-ribosyl)imidazole-4-carboxamide + L-glutamine = D-erythro-1-(imidazol-4-yl)glycerol 3-phosphate + 5-amino-1-(5-phospho-beta-D-ribosyl)imidazole-4-carboxamide + L-glutamate + H(+). Its pathway is amino-acid biosynthesis; L-histidine biosynthesis; L-histidine from 5-phospho-alpha-D-ribose 1-diphosphate: step 5/9. Functionally, IGPS catalyzes the conversion of PRFAR and glutamine to IGP, AICAR and glutamate. The HisF subunit catalyzes the cyclization activity that produces IGP and AICAR from PRFAR using the ammonia provided by the HisH subunit. This is Imidazole glycerol phosphate synthase subunit HisF from Mycolicibacterium gilvum (strain PYR-GCK) (Mycobacterium gilvum (strain PYR-GCK)).